Reading from the N-terminus, the 318-residue chain is Thymidylate synthase (318 aa).

DUMP-binding positions include arginine 25 and 180–181 (RR). Residue cysteine 200 is the Nucleophile of the active site. DUMP is bound by residues 220–223 (RSGD), asparagine 231, and 261–263 (HIY). (6R)-5,10-methylene-5,6,7,8-tetrahydrofolate is bound at residue aspartate 223. Alanine 317 contributes to the (6R)-5,10-methylene-5,6,7,8-tetrahydrofolate binding site.

The protein belongs to the thymidylate synthase family. Bacterial-type ThyA subfamily. In terms of assembly, homodimer.

It localises to the cytoplasm. It carries out the reaction dUMP + (6R)-5,10-methylene-5,6,7,8-tetrahydrofolate = 7,8-dihydrofolate + dTMP. It participates in pyrimidine metabolism; dTTP biosynthesis. In terms of biological role, catalyzes the reductive methylation of 2'-deoxyuridine-5'-monophosphate (dUMP) to 2'-deoxythymidine-5'-monophosphate (dTMP) while utilizing 5,10-methylenetetrahydrofolate (mTHF) as the methyl donor and reductant in the reaction, yielding dihydrofolate (DHF) as a by-product. This enzymatic reaction provides an intracellular de novo source of dTMP, an essential precursor for DNA biosynthesis. This Bacillus cytotoxicus (strain DSM 22905 / CIP 110041 / 391-98 / NVH 391-98) protein is Thymidylate synthase.